The following is a 158-amino-acid chain: Pyruvoyl-dependent arginine decarboxylase (158 aa).

Pyruvic acid (Ser) is present on Ser44.

It belongs to the PdaD family. Pyruvate serves as cofactor.

The catalysed reaction is L-arginine + H(+) = agmatine + CO2. This is Pyruvoyl-dependent arginine decarboxylase from Thermococcus sibiricus (strain DSM 12597 / MM 739).